Reading from the N-terminus, the 311-residue chain is Ribosomal RNA large subunit methyltransferase F (311 aa).

It belongs to the methyltransferase superfamily. METTL16/RlmF family.

The protein resides in the cytoplasm. The catalysed reaction is adenosine(1618) in 23S rRNA + S-adenosyl-L-methionine = N(6)-methyladenosine(1618) in 23S rRNA + S-adenosyl-L-homocysteine + H(+). In terms of biological role, specifically methylates the adenine in position 1618 of 23S rRNA. This is Ribosomal RNA large subunit methyltransferase F from Pectobacterium atrosepticum (strain SCRI 1043 / ATCC BAA-672) (Erwinia carotovora subsp. atroseptica).